We begin with the raw amino-acid sequence, 805 residues long: Phenylalanine--tRNA ligase beta subunit (805 aa).

Residues 39-148 enclose the tRNA-binding domain; that stretch reads APPFTGVVVA…AALRPGTDIR (110 aa). In terms of domain architecture, B5 spans 399 to 474; that stretch reads PVREPVRMRL…RVYGFERIPD (76 aa). 4 residues coordinate Mg(2+): Asp-452, Asp-458, Glu-461, and Glu-462. In terms of domain architecture, FDX-ACB spans 703-804; sequence SRQPAVVRDL…LVAAHNARQR (102 aa).

This sequence belongs to the phenylalanyl-tRNA synthetase beta subunit family. Type 1 subfamily. Tetramer of two alpha and two beta subunits. Requires Mg(2+) as cofactor.

The protein resides in the cytoplasm. It catalyses the reaction tRNA(Phe) + L-phenylalanine + ATP = L-phenylalanyl-tRNA(Phe) + AMP + diphosphate + H(+). This Bordetella bronchiseptica (strain ATCC BAA-588 / NCTC 13252 / RB50) (Alcaligenes bronchisepticus) protein is Phenylalanine--tRNA ligase beta subunit.